Consider the following 146-residue polypeptide: Hemoglobin subunit delta (146 aa).

Residues histidine 2 to histidine 146 form the Globin domain. Phosphoserine is present on serine 50. Positions 63 and 92 each coordinate heme b.

Belongs to the globin family. In terms of assembly, heterotetramer of two delta chains and two alpha chains. As to expression, red blood cells.

The polypeptide is Hemoglobin subunit delta (HBD) (Leontocebus nigricollis (Black-mantled tamarin)).